The sequence spans 323 residues: Annexin A5 (323 aa).

4 Annexin repeats span residues F17–V88, P89–Q160, G172–K244, and S248–G319.

It belongs to the annexin family.

Calcium/phospholipid-binding protein which promotes membrane fusion and is involved in exocytosis. This Cynops pyrrhogaster (Japanese fire-bellied newt) protein is Annexin A5.